The chain runs to 332 residues: Homoarginine-6-hydroxylase 2-ODD-C23.1 (332 aa).

The 106-residue stretch at 182-287 folds into the Fe2OG dioxygenase domain; the sequence is PFWVMRLIGY…RVCVAFFYET (106 aa). Fe cation contacts are provided by His-210, Asp-212, and His-268. Position 278 (Arg-278) interacts with 2-oxoglutarate.

Belongs to the iron/ascorbate-dependent oxidoreductase family. Fe(2+) is required as a cofactor.

The protein localises to the cytoplasm. It localises to the cytosol. It catalyses the reaction L-homoarginine + 2-oxoglutarate + O2 = 6-hydroxy-L-homoarginine + succinate + CO2. With respect to regulation, slightly inhibited by canavanine (Can), the 5-oxa-analog of arginine. Its function is as follows. 2-oxoglutarate-dependent dioxygenase catalyzing homoarginine 6-hydroxylation thus producing 6-hydroxy-L-homoarginine. Guanidine (Gd) is in turn synthesized by the spontaneous conversion of 6-hydroxy-L-homoarginine to (S)-2-amino-6-oxohexanoate (RHEA:79843); guanidine is a nitrogen-rich compound that can serve as a defense or signaling substance. The chain is Homoarginine-6-hydroxylase 2-ODD-C23.1 from Arabidopsis thaliana (Mouse-ear cress).